A 92-amino-acid chain; its full sequence is Protein 10 (92 aa).

The 12-residue stretch at 18–29 folds into the EF-hand domain; the sequence is FMQKYDKNSDQH.

Belongs to the calbindin family. Brain.

The protein is Protein 10 of Cavia porcellus (Guinea pig).